The following is a 717-amino-acid chain: Fatty acid oxidation complex subunit alpha (717 aa).

Positions 1–189 (MIYQSPTIEV…NVGAIDALVA (189 aa)) are enoyl-CoA hydratase/isomerase. Position 296 (aspartate 296) interacts with substrate. The interval 311-717 (KKVNSAAVLG…ANNGSYYQQA (407 aa)) is 3-hydroxyacyl-CoA dehydrogenase. Residues methionine 324, aspartate 343, 400 to 402 (VVE), lysine 407, and serine 429 contribute to the NAD(+) site. Histidine 450 acts as the For 3-hydroxyacyl-CoA dehydrogenase activity in catalysis. Asparagine 453 is an NAD(+) binding site. Positions 500 and 660 each coordinate substrate.

The protein in the N-terminal section; belongs to the enoyl-CoA hydratase/isomerase family. In the C-terminal section; belongs to the 3-hydroxyacyl-CoA dehydrogenase family. As to quaternary structure, heterotetramer of two alpha chains (FadB) and two beta chains (FadA).

It catalyses the reaction a (3S)-3-hydroxyacyl-CoA + NAD(+) = a 3-oxoacyl-CoA + NADH + H(+). It carries out the reaction a (3S)-3-hydroxyacyl-CoA = a (2E)-enoyl-CoA + H2O. The enzyme catalyses a 4-saturated-(3S)-3-hydroxyacyl-CoA = a (3E)-enoyl-CoA + H2O. The catalysed reaction is (3S)-3-hydroxybutanoyl-CoA = (3R)-3-hydroxybutanoyl-CoA. It catalyses the reaction a (3Z)-enoyl-CoA = a 4-saturated (2E)-enoyl-CoA. It carries out the reaction a (3E)-enoyl-CoA = a 4-saturated (2E)-enoyl-CoA. It participates in lipid metabolism; fatty acid beta-oxidation. Functionally, involved in the aerobic and anaerobic degradation of long-chain fatty acids via beta-oxidation cycle. Catalyzes the formation of 3-oxoacyl-CoA from enoyl-CoA via L-3-hydroxyacyl-CoA. It can also use D-3-hydroxyacyl-CoA and cis-3-enoyl-CoA as substrate. This chain is Fatty acid oxidation complex subunit alpha, found in Shewanella piezotolerans (strain WP3 / JCM 13877).